The sequence spans 736 residues: Peroxisomal multifunctional enzyme type 2 (736 aa).

The interval 1–305 is (3R)-hydroxyacyl-CoA dehydrogenase; the sequence is MGSPLRFDGR…IEVLSKIDSE (305 aa). NAD(+)-binding positions include 13-37, Leu21, and Asp40; that span reads LVTGAGAGLGRAYALAFAERGALVV. At Lys46 the chain carries N6-acetyllysine; alternate. The residue at position 46 (Lys46) is an N6-succinyllysine; alternate. A Phosphoserine modification is found at Ser52. Lys57 and Lys68 each carry N6-succinyllysine. 75 to 76 is an NAD(+) binding site; the sequence is SV. Lys84 carries the N6-succinyllysine modification. An NAD(+)-binding site is contributed by Asn99. Position 151 (Ser151) interacts with substrate. Tyr164 (proton acceptor) is an active-site residue. Residues 164 to 168 and 196 to 199 contribute to the NAD(+) site; these read YSAAK and AGSR. Thr265 is modified (phosphothreonine). Lys275 carries the N6-succinyllysine modification. A phosphoserine mark is found at Ser304 and Ser309. The tract at residues 322–622 is enoyl-CoA hydratase 2; it reads SGFAGAIGQK…AKTPSEGGKL (301 aa). The residue at position 356 (Lys356) is an N6-succinyllysine. 406–407 is a binding site for (3R)-3-hydroxydecanoyl-CoA; the sequence is HG. An N6-succinyllysine modification is found at Lys424. Residues Lys435, 510–515, Gly533, and Phe563 each bind (3R)-3-hydroxydecanoyl-CoA; that span reads DWNPLH. The MaoC-like domain maps to 484–600; the sequence is IPNRPPDAVL…QETGDIVISN (117 aa). An N6-acetyllysine modification is found at Lys565. An N6-succinyllysine mark is found at Lys579 and Lys663. The region spanning 624-736 is the SCP2 domain; it reads STFVFEEIGR…QMILKDYAKL (113 aa). Lys669 carries the post-translational modification N6-acetyllysine. Gln706 lines the substrate pocket. Lys707 is subject to N6-acetyllysine. Gln724 lines the substrate pocket. The residue at position 725 (Lys725) is an N6-succinyllysine. Positions 734 to 736 match the Microbody targeting signal motif; it reads AKL.

This sequence belongs to the short-chain dehydrogenases/reductases (SDR) family. In terms of assembly, homodimer. As to expression, present in many tissues with highest concentrations in liver, heart, prostate and testis.

Its subcellular location is the peroxisome. It catalyses the reaction a (3R)-3-hydroxyacyl-CoA + NAD(+) = a 3-oxoacyl-CoA + NADH + H(+). It carries out the reaction a (3R)-3-hydroxyacyl-CoA = a (2E)-enoyl-CoA + H2O. The enzyme catalyses (24R,25R)-3alpha,7alpha,12alpha,24-tetrahydroxy-5beta-cholestan-26-oyl-CoA = (24E)-3alpha,7alpha,12alpha-trihydroxy-5beta-cholest-24-en-26-oyl-CoA + H2O. The catalysed reaction is (2E)-octenoyl-CoA + H2O = (3R)-hydroxyoctanoyl-CoA. It catalyses the reaction (3R)-hydroxyoctanoyl-CoA + NAD(+) = 3-oxooctanoyl-CoA + NADH + H(+). It carries out the reaction (3R)-hydroxyhexadecanoyl-CoA + NAD(+) = 3-oxohexadecanoyl-CoA + NADH + H(+). The enzyme catalyses (2E)-hexadecenedioyl-CoA + H2O = (3R)-hydroxyhexadecanedioyl-CoA. The catalysed reaction is (3R)-hydroxyhexadecanedioyl-CoA + NAD(+) = 3-oxohexadecanedioyl-CoA + NADH + H(+). It catalyses the reaction (3R)-hydroxyhexadecanoyl-CoA = (2E)-hexadecenoyl-CoA + H2O. It carries out the reaction (3R)-3-hydroxydecanoyl-CoA = (2E)-decenoyl-CoA + H2O. The enzyme catalyses (3R)-3-hydroxydecanoyl-CoA + NAD(+) = 3-oxodecanoyl-CoA + NADH + H(+). The catalysed reaction is (24R,25R)-3alpha,7alpha,12alpha,24-tetrahydroxy-5beta-cholestan-26-oyl-CoA + NAD(+) = 3alpha,7alpha,12alpha-trihydroxy-24-oxo-5beta-cholestan-26-oyl-CoA + NADH + H(+). Its pathway is lipid metabolism; fatty acid beta-oxidation. Its function is as follows. Bifunctional enzyme acting on the peroxisomal fatty acid beta-oxidation pathway. Catalyzes two of the four reactions in fatty acid degradation: hydration of 2-enoyl-CoA (trans-2-enoyl-CoA) to produce (3R)-3-hydroxyacyl-CoA, and dehydrogenation of (3R)-3-hydroxyacyl-CoA to produce 3-ketoacyl-CoA (3-oxoacyl-CoA), which is further metabolized by SCPx. Can use straight-chain and branched-chain fatty acids, as well as bile acid intermediates as substrates. The chain is Peroxisomal multifunctional enzyme type 2 from Homo sapiens (Human).